A 424-amino-acid polypeptide reads, in one-letter code: MALFVISINHKTAPVAIREKVAFGPEKLADALERLRCRPDIDEVTILSTCNRTELYCATPGEPDEISLIEWLGQYHQVSLTELKACCNIYNDEDAAQHMMRVASGIDSMVLGEPQILGQMKEAHASGRAAGSLGGPLDRLFQHAFAVAKRVRTETAIGENPVSVAYAAVSMASHIFSNMEQNTALLIGAGETIELVARHLYRAGVRSLIVANRTLSRARDLAAEFHGSAIGLSDIPEYLHRADIVIASTASPLPILGKGAVEKALKRRKHKPMFMVDIAVPRDIEEEVSELADVYLYTVDDLRQVIEDNMKSREGAAEEAERLIAAGAADFMYHLRALDSVSVLRRFRDQAEGVRDAELQKAIRLLNRGDDPESVLRMLAHGLTNKLIHHPTVQVRRASAEGRQEVTGWLRDLFQLPDEKVNND.

Residues 49–52, Ser-108, 113–115, and Gln-119 each bind substrate; these read TCNR and EPQ. The active-site Nucleophile is the Cys-50. 188 to 193 provides a ligand contact to NADP(+); the sequence is GAGETI.

This sequence belongs to the glutamyl-tRNA reductase family. Homodimer.

The enzyme catalyses (S)-4-amino-5-oxopentanoate + tRNA(Glu) + NADP(+) = L-glutamyl-tRNA(Glu) + NADPH + H(+). It participates in porphyrin-containing compound metabolism; protoporphyrin-IX biosynthesis; 5-aminolevulinate from L-glutamyl-tRNA(Glu): step 1/2. In terms of biological role, catalyzes the NADPH-dependent reduction of glutamyl-tRNA(Glu) to glutamate 1-semialdehyde (GSA). This Hahella chejuensis (strain KCTC 2396) protein is Glutamyl-tRNA reductase.